Here is a 311-residue protein sequence, read N- to C-terminus: Tricarboxylate transport protein, mitochondrial (311 aa).

The propeptide at 1-13 is removed in mature form; sequence MAAARAPRALTSA. A compositionally biased stretch (low complexity) spans 1-15; it reads MAAARAPRALTSASP. The disordered stretch occupies residues 1-22; the sequence is MAAARAPRALTSASPGSGKAKL. Solcar repeat units lie at residues 23–111, 122–208, and 218–303; these read THPG…LSNH, TRGL…LRNW, and MNPL…VVKL. 3 helical membrane passes run 29–46, 86–105, and 129–143; these read ILAGGLAGGIEICITFPT, GLSSLLYGSIPKAAVRFGTF, and LGAGVPEAVVVVCPM. Serine 156 is modified (phosphoserine). 3 helical membrane-spanning segments follow: residues 183 to 202, 224 to 241, and 278 to 297; these read GLTATVLKQGSNQGIRFFVM, GVFGAIAGAASVFGNTPL, and GTVPRLGRVCLDVAIVFIIY.

This sequence belongs to the mitochondrial carrier (TC 2.A.29) family. Possesses a short cleavable presequence, which, however, is found to be dispensable both for targeting to mitochondria and insertion into the inner membrane. However, the presequence is required to keep SLC25A1 in a soluble state and thus in an import-competent state. Mature SLC25A1 lacking the presequence is prone to aggregation.

It localises to the mitochondrion inner membrane. Its subcellular location is the mitochondrion membrane. It carries out the reaction (S)-malate(in) + citrate(out) = (S)-malate(out) + citrate(in). The catalysed reaction is D-threo-isocitrate(in) + citrate(out) = D-threo-isocitrate(out) + citrate(in). It catalyses the reaction citrate(out) + succinate(in) = citrate(in) + succinate(out). The enzyme catalyses phosphoenolpyruvate(in) + citrate(out) = phosphoenolpyruvate(out) + citrate(in). It carries out the reaction cis-aconitate(in) + citrate(out) = cis-aconitate(out) + citrate(in). The catalysed reaction is trans-aconitate(in) + citrate(out) = trans-aconitate(out) + citrate(in). It catalyses the reaction maleate(in) + citrate(out) = maleate(out) + citrate(in). Functionally, mitochondrial electroneutral antiporter that exports citrate from the mitochondria into the cytosol in exchange for malate. Also able to mediate the exchange of citrate for isocitrate, phosphoenolpyruvate, cis-aconitate and to a lesser extent trans-aconitate, maleate and succinate. In the cytoplasm, citrate plays important roles in fatty acid and sterol synthesis, regulation of glycolysis, protein acetylation, and other physiopathological processes. This chain is Tricarboxylate transport protein, mitochondrial (SLC25A1), found in Bos taurus (Bovine).